A 417-amino-acid polypeptide reads, in one-letter code: MKFVIESLTKNSGRLGRLHIKDGAPGQRTPLLMQTTKGGSIPYLSADVFESHVTETPQLLELTLSTIDHMSEALAQFNSADRGLSDYIGFPGHLNVLLLRDPCETTPAGGNDRDIQPLFTRRGKESLSPKRYMEMVASLRPDIYQGLCDADTNAESAKKRVQKSVDRTEKFMHYIYEHKSKVDSTLLAPIVGGYNTFARTQSIKHALEQPSGSYGGYVFEGFHTNGLSATILDASKLLPIVEHCVGQLEEEKPRMVPGAYTPLTTLELIGLGMDLFDTSYAYCAAVNFKALTFTFVQDEVVHVPFLDITDDAIKEDFSPLLKNCVCLSCQKHTRAYVHHLYKTNELLGPILLMVHNLHHYMAFFEAIRESIARDGLPQLTELVRRQNGDSQVDYSIAPNRKVISKATMGKGFAAAAV.

Residues Cys324, Cys326, Cys329, and His355 each contribute to the Zn(2+) site.

The protein belongs to the queuine tRNA-ribosyltransferase family. QTRT2 subfamily. As to quaternary structure, heterodimer of a catalytic subunit and an accessory subunit. The cofactor is Zn(2+).

Its subcellular location is the cytoplasm. In terms of biological role, non-catalytic subunit of the queuine tRNA-ribosyltransferase (TGT) that catalyzes the base-exchange of a guanine (G) residue with queuine (Q) at position 34 (anticodon wobble position) in tRNAs with GU(N) anticodons (tRNA-Asp, -Asn, -His and -Tyr), resulting in the hypermodified nucleoside queuosine (7-(((4,5-cis-dihydroxy-2-cyclopenten-1-yl)amino)methyl)-7-deazaguanosine). The polypeptide is Queuine tRNA-ribosyltransferase accessory subunit 2 (Drosophila persimilis (Fruit fly)).